Reading from the N-terminus, the 316-residue chain is Glycine--tRNA ligase alpha subunit (316 aa).

It belongs to the class-II aminoacyl-tRNA synthetase family. Tetramer of two alpha and two beta subunits.

It is found in the cytoplasm. The enzyme catalyses tRNA(Gly) + glycine + ATP = glycyl-tRNA(Gly) + AMP + diphosphate. In Paracoccus denitrificans (strain Pd 1222), this protein is Glycine--tRNA ligase alpha subunit.